The sequence spans 139 residues: Cystatin cpi-1 (139 aa).

Positions 1-19 (MRFILLIALVFAVLDGINC) are cleaved as a signal peptide. N-linked (GlcNAc...) asparagine glycosylation occurs at Asn-29. A Secondary area of contact motif is present at residues 65–69 (QVVAG). A disulfide bridge links Cys-83 with Cys-99.

This sequence belongs to the cystatin family.

Functionally, cysteine protease inhibitor which inhibits members of the peptidase C1 family. Does not inhibit asparaginyl endopeptidase. May play a protective role against exogenous cysteine proteases derived from soil bacteria or fungi, or rotting fruits and vegetation. This chain is Cystatin cpi-1, found in Caenorhabditis elegans.